The chain runs to 528 residues: Probable cyclic di-GMP phosphodiesterase PdeC (528 aa).

Transmembrane regions (helical) follow at residues 14–34 and 242–262; these read GIIFLVLFPIILSLWIAFLWA and HLIFALPAGILGSLVLLLLWL. Residues 268–520 form the EAL domain; sequence YLSPKRKLQR…VFMQWMEQLP (253 aa).

The protein localises to the cell inner membrane. It carries out the reaction 3',3'-c-di-GMP + H2O = 5'-phosphoguanylyl(3'-&gt;5')guanosine + H(+). Its function is as follows. Phosphodiesterase (PDE) that catalyzes the hydrolysis of cyclic-di-GMP (c-di-GMP) to 5'-pGpG. Cyclic-di-GMP is a second messenger which controls cell surface-associated traits in bacteria. Overexpression reduces biofilm formation. This chain is Probable cyclic di-GMP phosphodiesterase PdeC, found in Escherichia coli (strain K12).